We begin with the raw amino-acid sequence, 203 residues long: Large ribosomal subunit protein bL25 (203 aa).

It belongs to the bacterial ribosomal protein bL25 family. CTC subfamily. In terms of assembly, part of the 50S ribosomal subunit; part of the 5S rRNA/L5/L18/L25 subcomplex. Contacts the 5S rRNA. Binds to the 5S rRNA independently of L5 and L18.

Its function is as follows. This is one of the proteins that binds to the 5S RNA in the ribosome where it forms part of the central protuberance. This is Large ribosomal subunit protein bL25 from Psychromonas ingrahamii (strain DSM 17664 / CCUG 51855 / 37).